We begin with the raw amino-acid sequence, 382 residues long: Cytochrome c biogenesis CcmF N-terminal-like mitochondrial protein 1 (382 aa).

4 helical membrane passes run 1–21 (MSIS…FVAF), 30–50 (AFGA…LLFC), 79–99 (HEGS…FFCY), and 117–137 (SLFF…LLRY).

This sequence belongs to the CcmF/CycK/Ccl1/NrfE/CcsA family. As to quaternary structure, interacts with CCMFN2 and CCMH.

The protein localises to the mitochondrion inner membrane. In terms of biological role, forms a complex with CCMFC, CCMFN2 and CCMH that performs the assembly of heme with c-type apocytochromes in mitochondria. This Arabidopsis thaliana (Mouse-ear cress) protein is Cytochrome c biogenesis CcmF N-terminal-like mitochondrial protein 1.